Here is a 348-residue protein sequence, read N- to C-terminus: Flagellar P-ring protein (348 aa).

An N-terminal signal peptide occupies residues 1–24 (MRRKNNNKIWIWVATLILSISALY).

The protein belongs to the FlgI family. The basal body constitutes a major portion of the flagellar organelle and consists of four rings (L,P,S, and M) mounted on a central rod.

It localises to the periplasm. Its subcellular location is the bacterial flagellum basal body. Functionally, assembles around the rod to form the L-ring and probably protects the motor/basal body from shearing forces during rotation. This is Flagellar P-ring protein from Helicobacter hepaticus (strain ATCC 51449 / 3B1).